The sequence spans 393 residues: PPE family protein PPE26 (393 aa).

The protein belongs to the mycobacterial PPE family. As to quaternary structure, interacts with human TLR2.

Functionally, probably plays a key role in regulating innate and adaptive immune responses through human Toll-like receptor 2 (TLR2). Interacts with TLR2, leading to the subsequent activation of the mitogen-activated protein kinase (MAPK) and nuclear factor kappa B (NF-kappa-B) signaling pathways. Stimulates macrophage activation by augmenting pro-inflammatory cytokine production (TNF-alpha, IL-6 and IL-12p40) and the expression of cell surface molecules (CD80, CD86, MHC class I and II). Also participates in adaptive immunity by directing Th1-polarised immune responses. The protein is PPE family protein PPE26 of Mycobacterium tuberculosis (strain ATCC 25618 / H37Rv).